The following is a 654-amino-acid chain: Import motor subunit, mitochondrial (654 aa).

Residues 1-23 (MLAAKNILNRSSLSSSFRIATRL) constitute a mitochondrion transit peptide. Thr-330 carries the post-translational modification Phosphothreonine. Residues 629 to 654 (EQLYKNDSNNNNNNNGNNAESGETKQ) are disordered. A compositionally biased stretch (low complexity) spans 637 to 646 (NNNNNNNGNN).

It belongs to the heat shock protein 70 family. Component of the PAM complex, at least composed of SSC1 (mtHsp70), MGE1, TIM44, PAM16/TIM16, PAM17 and PAM18/TIM14. In the complex, SSC1 interacts directly with PAM18 and TIM44. Interacts with NAP1.

The protein resides in the mitochondrion matrix. It carries out the reaction ATP + H2O = ADP + phosphate + H(+). Essential component of the PAM complex, a complex required for the translocation of transit peptide-containing proteins from the inner membrane into the mitochondrial matrix in an ATP-dependent manner. Constitutes the ATP-driven core of the motor and binds the precursor preprotein. Required for the import of the processed frataxin homolog YFH1 into the mitochondrion. The polypeptide is Import motor subunit, mitochondrial (Saccharomyces cerevisiae (strain ATCC 204508 / S288c) (Baker's yeast)).